Here is a 365-residue protein sequence, read N- to C-terminus: Class I histocompatibility antigen, B alpha chain (365 aa).

Residues 1–24 form the signal peptide; it reads MTVMAPRTLLLLLSGALVLTETWA. The alpha-1 stretch occupies residues 25–114; sequence GSHSMRYFST…ALGYYNQSEA (90 aa). Residues 25–308 lie on the Extracellular side of the membrane; it reads GSHSMRYFST…EPPSQPTIPI (284 aa). The N-linked (GlcNAc...) asparagine glycan is linked to asparagine 110. The alpha-2 stretch occupies residues 115 to 206; it reads GSHTIQMMSG…ENGKETLQRA (92 aa). Cystine bridges form between cysteine 125–cysteine 188 and cysteine 227–cysteine 283. The interval 207–298 is alpha-3; it reads EPPKTHVTHH…GLPEPLTLRW (92 aa). In terms of domain architecture, Ig-like C1-type spans 209 to 297; it reads PKTHVTHHPV…EGLPEPLTLR (89 aa). The segment at 299-308 is connecting peptide; sequence EPPSQPTIPI. The chain crosses the membrane as a helical span at residues 309-332; sequence MGIVAILAILGAVVTGAVVTAVMW. Residues 333 to 365 lie on the Cytoplasmic side of the membrane; it reads RKKSSDKKGGSYSQAARSDSAQGSDVSLTACKV. The segment at 337-361 is disordered; that stretch reads SDKKGGSYSQAARSDSAQGSDVSLT. Polar residues predominate over residues 346-359; that stretch reads QAARSDSAQGSDVS. Phosphoserine occurs at positions 356 and 359.

This sequence belongs to the MHC class I family. As to quaternary structure, heterodimer of an alpha chain and a beta chain (beta-2-microglobulin).

Its subcellular location is the membrane. Its function is as follows. Involved in the presentation of foreign antigens to the immune system. The polypeptide is Class I histocompatibility antigen, B alpha chain (Saguinus oedipus (Cotton-top tamarin)).